We begin with the raw amino-acid sequence, 161 residues long: Shikimate kinase (161 aa).

10–15 (GAGKTT) contacts ATP. Threonine 14 serves as a coordination point for Mg(2+). Residues aspartate 28, arginine 52, and glycine 74 each coordinate substrate. Position 114 (arginine 114) interacts with ATP. Substrate is bound at residue arginine 132.

This sequence belongs to the shikimate kinase family. In terms of assembly, monomer. Mg(2+) serves as cofactor.

Its subcellular location is the cytoplasm. It catalyses the reaction shikimate + ATP = 3-phosphoshikimate + ADP + H(+). It participates in metabolic intermediate biosynthesis; chorismate biosynthesis; chorismate from D-erythrose 4-phosphate and phosphoenolpyruvate: step 5/7. Catalyzes the specific phosphorylation of the 3-hydroxyl group of shikimic acid using ATP as a cosubstrate. The polypeptide is Shikimate kinase (Streptococcus gordonii (strain Challis / ATCC 35105 / BCRC 15272 / CH1 / DL1 / V288)).